The primary structure comprises 717 residues: Scinderin (717 aa).

The tract at residues 1-363 (MAPERHPPAF…DGFGKVYVTE (363 aa)) is actin-severing. The Gelsolin-like 1 repeat unit spans residues 28 to 108 (ELVPVPPSRH…IQGYESNEFV (81 aa)). Residues 112–119 (KGGIKYKA) and 138–146 (RLLHIKGRR) contribute to the a 1,2-diacyl-sn-glycero-3-phospho-(1D-myo-inositol-4,5-bisphosphate) site. 5 Gelsolin-like repeats span residues 148–220 (VRAT…PDEL), 265–340 (VVAE…TPIF), 408–483 (RVPV…PHLL), 526–590 (AEVD…EEFW), and 628–703 (IEEV…PPTF). Residues 364–715 (RVAKIEQIEF…WFLAWDSNKW (352 aa)) are ca(2+)-dependent actin binding. Residues Asn538, Asp539, Glu562, Asp643, Asp644, and Glu666 each contribute to the Ca(2+) site.

Belongs to the villin/gelsolin family.

It localises to the cytoplasm. The protein localises to the cytoskeleton. Its subcellular location is the cell projection. It is found in the podosome. Its function is as follows. Ca(2+)-dependent actin filament-severing protein that has a regulatory function in exocytosis by affecting the organization of the microfilament network underneath the plasma membrane. In vitro, also has barbed end capping and nucleating activities in the presence of Ca(2+). Severing activity is inhibited by phosphatidylinositol 4,5-bis-phosphate (PIP2). Required for megakaryocyte differentiation, maturation, polyploidization and apoptosis with the release of platelet-like particles. Plays a role in osteoclastogenesis (OCG) and actin cytoskeletal organization in osteoclasts. Regulates chondrocyte proliferation and differentiation. Inhibits cell proliferation and tumorigenesis. Signaling is mediated by MAPK, p38 and JNK pathways. This chain is Scinderin (SCIN), found in Gallus gallus (Chicken).